Here is a 139-residue protein sequence, read N- to C-terminus: Probable transcription termination protein NusA (139 aa).

A KH domain is found at 97–139 (STVAYAEVDRADTGVAIGRDGETIETARRLAERQFDIDDIELA).

Belongs to the NusA family.

It is found in the cytoplasm. Functionally, participates in transcription termination. The protein is Probable transcription termination protein NusA of Halococcus morrhuae (Micrococcus morrhuae).